Here is a 436-residue protein sequence, read N- to C-terminus: ABC transporter permease YtrF (436 aa).

The signal sequence occupies residues 1–31 (MRFKDQVHFIRRNMKKNRLRVFMTILATTMA). Residue Cys32 is the site of N-palmitoyl cysteine attachment. Residue Cys32 is the site of S-diacylglycerol cysteine attachment. The stretch at 115 to 165 (NMNDELKANMELEKGRVAKSENEIVVGYDFAKRLLTKKESEEYNKKIEEAK) forms a coiled coil. Helical transmembrane passes span 293–313 (FKIGLIFVGCIAVIISAIGIF), 350–370 (YIGILGCVIGIIISYGVSYLV), and 396–416 (IPASLVIIAVVICGGVAVISG).

This sequence belongs to the ABC-4 integral membrane protein family. As to quaternary structure, the complex is composed of 2 ATP-binding proteins (YtrB and YtrE), 2 transmembrane proteins (YtrC and YtrD) and a solute-binding protein (YtrF).

The protein localises to the cell membrane. Its function is as follows. Part of the ABC transporter complex YtrBCDEF that plays a role in acetoin utilization during stationary phase and sporulation. In Bacillus subtilis (strain 168), this protein is ABC transporter permease YtrF (ytrF).